Consider the following 321-residue polypeptide: Lipoyl synthase (321 aa).

[4Fe-4S] cluster-binding residues include cysteine 68, cysteine 73, cysteine 79, cysteine 94, cysteine 98, cysteine 101, and serine 308. Residues 80–297 (FNHGTATFMI…KVLADELGFT (218 aa)) enclose the Radical SAM core domain.

This sequence belongs to the radical SAM superfamily. Lipoyl synthase family. [4Fe-4S] cluster is required as a cofactor.

Its subcellular location is the cytoplasm. It carries out the reaction [[Fe-S] cluster scaffold protein carrying a second [4Fe-4S](2+) cluster] + N(6)-octanoyl-L-lysyl-[protein] + 2 oxidized [2Fe-2S]-[ferredoxin] + 2 S-adenosyl-L-methionine + 4 H(+) = [[Fe-S] cluster scaffold protein] + N(6)-[(R)-dihydrolipoyl]-L-lysyl-[protein] + 4 Fe(3+) + 2 hydrogen sulfide + 2 5'-deoxyadenosine + 2 L-methionine + 2 reduced [2Fe-2S]-[ferredoxin]. It participates in protein modification; protein lipoylation via endogenous pathway; protein N(6)-(lipoyl)lysine from octanoyl-[acyl-carrier-protein]: step 2/2. Its function is as follows. Catalyzes the radical-mediated insertion of two sulfur atoms into the C-6 and C-8 positions of the octanoyl moiety bound to the lipoyl domains of lipoate-dependent enzymes, thereby converting the octanoylated domains into lipoylated derivatives. The polypeptide is Lipoyl synthase (Shewanella denitrificans (strain OS217 / ATCC BAA-1090 / DSM 15013)).